Reading from the N-terminus, the 94-residue chain is Small ribosomal subunit protein uS19 (94 aa).

The protein belongs to the universal ribosomal protein uS19 family.

In terms of biological role, protein S19 forms a complex with S13 that binds strongly to the 16S ribosomal RNA. This chain is Small ribosomal subunit protein uS19, found in Desulforamulus reducens (strain ATCC BAA-1160 / DSM 100696 / MI-1) (Desulfotomaculum reducens).